We begin with the raw amino-acid sequence, 120 residues long: Large ribosomal subunit protein bL20c (120 aa).

Belongs to the bacterial ribosomal protein bL20 family.

The protein resides in the plastid. Functionally, binds directly to 23S ribosomal RNA and is necessary for the in vitro assembly process of the 50S ribosomal subunit. It is not involved in the protein synthesizing functions of that subunit. This chain is Large ribosomal subunit protein bL20c, found in Cuscuta obtusiflora (Peruvian dodder).